The primary structure comprises 70 residues: MKVYCLLLVLLVGLVSQAHGKPTKRCLSVCSAEYEPVCGSDGKTYANKCHLMTEACWSPTSITLVHEGKC.

The N-terminal stretch at 1 to 20 is a signal peptide; the sequence is MKVYCLLLVLLVGLVSQAHG. Residues 21–70 form the Kazal-like domain; sequence KPTKRCLSVCSAEYEPVCGSDGKTYANKCHLMTEACWSPTSITLVHEGKC. 3 disulfides stabilise this stretch: Cys26-Cys56, Cys30-Cys49, and Cys38-Cys70.

The protein belongs to the conopeptide P-like superfamily. In terms of tissue distribution, expressed by the venom duct.

It is found in the secreted. Functionally, acts as a neurotoxin by inhibiting an ion channel. May also act as a serine protease inhibitor, since it possess the kazal serine protease inhibitor signature. The chain is Turripeptide Lol9.1 from Iotyrris olangoensis (Sea snail).